A 319-amino-acid chain; its full sequence is Protoheme IX farnesyltransferase (319 aa).

8 helical membrane-spanning segments follow: residues 59–79, 108–128, 131–151, 158–178, 183–203, 232–252, 254–274, and 299–319; these read IGLI…AGAF, EALV…WFGA, LSAW…TIIL, NIVW…AAVT, WPAI…YWPL, VVLY…AGGA, WVYT…SHAL, and LTLL…VIGG.

This sequence belongs to the UbiA prenyltransferase family. Protoheme IX farnesyltransferase subfamily.

The protein localises to the cell membrane. The enzyme catalyses heme b + (2E,6E)-farnesyl diphosphate + H2O = Fe(II)-heme o + diphosphate. The protein operates within porphyrin-containing compound metabolism; heme O biosynthesis; heme O from protoheme: step 1/1. In terms of biological role, converts heme B (protoheme IX) to heme O by substitution of the vinyl group on carbon 2 of heme B porphyrin ring with a hydroxyethyl farnesyl side group. The protein is Protoheme IX farnesyltransferase of Pseudarthrobacter chlorophenolicus (strain ATCC 700700 / DSM 12829 / CIP 107037 / JCM 12360 / KCTC 9906 / NCIMB 13794 / A6) (Arthrobacter chlorophenolicus).